A 72-amino-acid polypeptide reads, in one-letter code: DNA-directed RNA polymerase subunit Rpo10 (72 aa).

Cys7, Cys10, Cys45, and Cys46 together coordinate Zn(2+).

It belongs to the archaeal Rpo10/eukaryotic RPB10 RNA polymerase subunit family. Part of the RNA polymerase complex. Zn(2+) is required as a cofactor.

The protein localises to the cytoplasm. It carries out the reaction RNA(n) + a ribonucleoside 5'-triphosphate = RNA(n+1) + diphosphate. In terms of biological role, DNA-dependent RNA polymerase (RNAP) catalyzes the transcription of DNA into RNA using the four ribonucleoside triphosphates as substrates. The protein is DNA-directed RNA polymerase subunit Rpo10 of Methanopyrus kandleri (strain AV19 / DSM 6324 / JCM 9639 / NBRC 100938).